A 328-amino-acid polypeptide reads, in one-letter code: Transcription factor bHLH84 (328 aa).

Positions 145 to 248 (QCESSKKRTR…ASRGAATDPQ (104 aa)) are disordered. A compositionally biased stretch (basic and acidic residues) spans 220 to 229 (LSKEDGEDSK). One can recognise a bHLH domain in the interval 243-292 (AATDPQSLYARKRRERINERLRILQHLVPNGTKVDISTMLEEAVQYVKFL).

Belongs to the bHLH protein family. As to quaternary structure, homodimer.

It localises to the nucleus. The protein is Transcription factor bHLH84 (BHLH84) of Arabidopsis thaliana (Mouse-ear cress).